Here is a 131-residue protein sequence, read N- to C-terminus: Translation initiation factor 5A (131 aa).

Residue K37 is modified to Hypusine.

This sequence belongs to the eIF-5A family.

It is found in the cytoplasm. Its function is as follows. Functions by promoting the formation of the first peptide bond. The polypeptide is Translation initiation factor 5A (eIF5A) (Methanococcus aeolicus (strain ATCC BAA-1280 / DSM 17508 / OCM 812 / Nankai-3)).